The following is a 248-amino-acid chain: Probable transcriptional regulatory protein trd_1132 (248 aa).

This sequence belongs to the TACO1 family.

The protein resides in the cytoplasm. The chain is Probable transcriptional regulatory protein trd_1132 from Thermomicrobium roseum (strain ATCC 27502 / DSM 5159 / P-2).